Consider the following 101-residue polypeptide: Large ribosomal subunit protein uL24 (101 aa).

Belongs to the universal ribosomal protein uL24 family. Part of the 50S ribosomal subunit.

One of two assembly initiator proteins, it binds directly to the 5'-end of the 23S rRNA, where it nucleates assembly of the 50S subunit. Functionally, one of the proteins that surrounds the polypeptide exit tunnel on the outside of the subunit. The protein is Large ribosomal subunit protein uL24 of Borrelia recurrentis (strain A1).